We begin with the raw amino-acid sequence, 253 residues long: Uracil-DNA glycosylase (253 aa).

Residue D79 is the Proton acceptor of the active site.

This sequence belongs to the uracil-DNA glycosylase (UDG) superfamily. UNG family.

The protein localises to the cytoplasm. It catalyses the reaction Hydrolyzes single-stranded DNA or mismatched double-stranded DNA and polynucleotides, releasing free uracil.. Functionally, excises uracil residues from the DNA which can arise as a result of misincorporation of dUMP residues by DNA polymerase or due to deamination of cytosine. The polypeptide is Uracil-DNA glycosylase (Xylella fastidiosa (strain M12)).